The following is a 525-amino-acid chain: Nuclear polyadenylated RNA-binding protein NAB2 (525 aa).

Disordered stretches follow at residues 102–160 and 196–236; these read SDIA…QLQP and QFAP…STRF. A compositionally biased stretch (low complexity) spans 103–160; the sequence is DIAQQQQQQQQQQQPDIAQQQPQQQPQQQPQQQPQQQPQQQPQQQPQQQPQQQPQLQP. 9 tandem repeats follow at residues 121-124, 125-128, 129-132, 133-136, 137-140, 141-144, 145-148, 149-152, and 153-156. Residues 121-156 are 10 X 4 AA tandem repeats of Q-Q-Q-P; the sequence is QQQPQQQPQQQPQQQPQQQPQQQPQQQPQQQPQQQP. The 10; approximate repeat unit spans residues 157 to 160; sequence QLQP. Residues R209 and R222 each carry the omega-N-methylarginine modification. Residues 209–228 are RNA-binding RGG-box; that stretch reads RGGGAVGKNRRGGRGGNRGG. Positions 209–239 are PY-NLS nuclear localization signal; sequence RGGGAVGKNRRGGRGGNRGGRNNNSTRFNPL. Residue T254 is modified to Phosphothreonine. 7 C3H1-type zinc fingers span residues 262–278, 283–300, 340–355, 371–386, 415–430, 437–452, and 458–473; these read CRLF…PHAH, CNEY…EFLH, CKFG…PFGH, CDKN…RKAH, CKFG…KYRH, CREG…LFGH, and CRFG…LFRH. A disordered region spans residues 503–525; sequence NAIIENAPPQTSFTHQEQDTEMN. Residues 510–525 are compositionally biased toward polar residues; it reads PPQTSFTHQEQDTEMN.

The protein belongs to the ZC3H14 family. As to quaternary structure, interacts with MLP1. Interacts with PUB1. Post-translationally, methylated by HMT1.

Its subcellular location is the nucleus. The protein localises to the cytoplasm. In terms of biological role, RNA-binding protein involved in RNA processing and transcription regulation. Acts as a regulator of mRNA stability: binds the poly(A) tail of mRNAs and pre-mRNAs, preventing their degradation by the exosome. Involved in the biogenesis of circular RNAs (circRNAs) which are produced by back-splicing circularization of pre-mRNAs. Involved in mRNA poly(A) tail length control and nuclear export. Functions in surveillance and the packaging leading to generation of export-competent mRNPs. Controls both mRNP compaction that facilitates movement through nuclear pore complexes and the length of transcript poly(A) tails. Also acts as a regulator of transcription. Associates directly with nascent RNA polymerase II transcripts and remains associated during subsequent nuclear RNA processing reactions. Required for RNA polymerase III (RNAPIII) transcription: required for the occupancy of RNAPIII and Transcription factor IIIB (TFIIIB) at target genes, possibly via direct association with nascent RNAPIII transcripts. The sequence is that of Nuclear polyadenylated RNA-binding protein NAB2 from Saccharomyces cerevisiae (strain ATCC 204508 / S288c) (Baker's yeast).